Here is a 291-residue protein sequence, read N- to C-terminus: N-acetylmannosamine kinase (291 aa).

ATP contacts are provided by residues alanine 5–lysine 12 and glycine 132–cysteine 139. Positions 156, 166, 168, and 173 each coordinate Zn(2+).

The protein belongs to the ROK (NagC/XylR) family. NanK subfamily. As to quaternary structure, homodimer.

It carries out the reaction an N-acyl-D-mannosamine + ATP = an N-acyl-D-mannosamine 6-phosphate + ADP + H(+). It participates in amino-sugar metabolism; N-acetylneuraminate degradation; D-fructose 6-phosphate from N-acetylneuraminate: step 2/5. In terms of biological role, catalyzes the phosphorylation of N-acetylmannosamine (ManNAc) to ManNAc-6-P. The polypeptide is N-acetylmannosamine kinase (Salmonella paratyphi B (strain ATCC BAA-1250 / SPB7)).